A 141-amino-acid chain; its full sequence is Phage-like element PBSX protein XkdS (141 aa).

The protein to B.subtilis YqbS.

The sequence is that of Phage-like element PBSX protein XkdS (xkdS) from Bacillus subtilis (strain 168).